Here is a 297-residue protein sequence, read N- to C-terminus: Nicotinate-nucleotide pyrophosphorylase [carboxylating] (297 aa).

An important for hexamer formation region spans residues 8-12; sequence LLLPP. Quinolinate contacts are provided by residues Arg-102, 138–139, 160–161, Lys-171, Glu-201, Asp-222, 248–250, and Gly-270; these read RK, HR, and SGG.

It belongs to the NadC/ModD family. As to quaternary structure, hexamer formed by 3 homodimers.

It catalyses the reaction nicotinate beta-D-ribonucleotide + CO2 + diphosphate = quinolinate + 5-phospho-alpha-D-ribose 1-diphosphate + 2 H(+). It participates in cofactor biosynthesis; NAD(+) biosynthesis; nicotinate D-ribonucleotide from quinolinate: step 1/1. Activity toward QA is slightly repressed by phosphoribosylpyrophosphate (PRPP) in both a competitive and a non-competitive manner. Competitively inhibited by phthalic acid (PHT). Its function is as follows. Involved in the catabolism of quinolinic acid (QA). This is Nicotinate-nucleotide pyrophosphorylase [carboxylating] (QPRT) from Homo sapiens (Human).